Reading from the N-terminus, the 1218-residue chain is Protein STICHEL (1218 aa).

Residues 24 to 136 (AGRVLRDPGT…SDARNGGDSY (113 aa)) form a disordered region. Composition is skewed to polar residues over residues 32 to 46 (GTTS…SSRS), 54 to 73 (ASRN…SSTN), and 86 to 95 (WKTQKSSSEK). A Bipartite nuclear localization signal motif is present at residues 163-180 (RKSNVGSCKKKSKKKISS). 2 consecutive short sequence motifs (PEST) follow at residues 273–304 (RNPS…LPGR) and 425–449 (RSQD…ETIR). Residue 490–497 (GPRGTGKT) participates in ATP binding. Residues Cys-509, Cys-518, Cys-521, and Cys-524 each contribute to the Zn(2+) site. Positions 762–788 (EADMEGLKHALKLLSEAEKQLRVSNDR) form a coiled coil. A disordered region spans residues 802 to 828 (MPSPGTTHTGSSRRQSSRATDDDPASV). Residues 804-819 (SPGTTHTGSSRRQSSR) are compositionally biased toward polar residues. Short sequence motifs (bipartite nuclear localization signal) lie at residues 1178 to 1195 (RRSK…SRRN) and 1196 to 1213 (RKSR…RKAE).

It belongs to the DnaX/STICHEL family. As to quaternary structure, interacts with BLT. In terms of tissue distribution, ubiquitous.

It is found in the nucleus. Acts as a key regulator of trichome branching through an endoreduplication-independent pathway. The polypeptide is Protein STICHEL (STI) (Arabidopsis thaliana (Mouse-ear cress)).